Consider the following 85-residue polypeptide: MQFTKLATVLIVSLMGSAAIAAPSVDNAPAVAAEEVAAAPAENLEKRGFGCPLNERECHSHCQSIGRKFGYCGGTLRLTCICGKE.

The signal sequence occupies residues 1–21 (MQFTKLATVLIVSLMGSAAIA). Residues 22 to 47 (APSVDNAPAVAAEEVAAAPAENLEKR) constitute a propeptide that is removed on maturation. 3 cysteine pairs are disulfide-bonded: C51/C72, C58/C80, and C62/C82.

Belongs to the invertebrate defensin family. Disulfide bonds are essential for antimicrobial activity.

Its subcellular location is the secreted. Antimicrobial peptide with broad-spectrum activity against Gram-positive bacteria, Gram-negative bacteria, and fungi. Also inhibits clinical isolates, including methicillin-resistant S.aureus (MRSA) (MIC=32 uM), K.pneumoniae, C.albicans and C.parapsilosis. Displays minimal inhibitory concentration (MIC) values similar to minimal bactericidal concentrations (MBC), suggesting a disruptive mechanism mode of action associated with membrane lysis. In vitro, shows hemolytic activity against human red blood cells. The chain is Fungal defensin triintsin from Trichophyton interdigitale (strain MR816).